The chain runs to 67 residues: Large ribosomal subunit protein bL35 (67 aa).

Belongs to the bacterial ribosomal protein bL35 family.

In Zymomonas mobilis subsp. mobilis (strain ATCC 31821 / ZM4 / CP4), this protein is Large ribosomal subunit protein bL35.